The sequence spans 263 residues: Protein sco1 (263 aa).

3 residues coordinate Cu cation: Cys-130, Cys-134, and His-222.

It belongs to the SCO1/2 family.

The protein localises to the mitochondrion inner membrane. Functionally, acts as a copper chaperone, transporting copper to the Cu(A) site on the cytochrome c oxidase subunit II (COX2). The polypeptide is Protein sco1 (sco1) (Schizosaccharomyces pombe (strain 972 / ATCC 24843) (Fission yeast)).